The sequence spans 443 residues: Ribulose bisphosphate carboxylase large chain (443 aa).

Substrate contacts are provided by Asn89 and Thr139. Lys141 acts as the Proton acceptor in catalysis. Lys143 serves as a coordination point for substrate. 3 residues coordinate Mg(2+): Lys167, Asp169, and Glu170. Lys167 bears the N6-carboxylysine mark. Catalysis depends on His260, which acts as the Proton acceptor. The substrate site is built by Arg261, His293, and Ser345.

It belongs to the RuBisCO large chain family. Type I subfamily. In terms of assembly, heterohexadecamer of 8 large chains and 8 small chains; disulfide-linked. The disulfide link is formed within the large subunit homodimers. It depends on Mg(2+) as a cofactor. The disulfide bond which can form in the large chain dimeric partners within the hexadecamer appears to be associated with oxidative stress and protein turnover.

The protein resides in the plastid. It localises to the chloroplast. The catalysed reaction is 2 (2R)-3-phosphoglycerate + 2 H(+) = D-ribulose 1,5-bisphosphate + CO2 + H2O. It catalyses the reaction D-ribulose 1,5-bisphosphate + O2 = 2-phosphoglycolate + (2R)-3-phosphoglycerate + 2 H(+). Its function is as follows. RuBisCO catalyzes two reactions: the carboxylation of D-ribulose 1,5-bisphosphate, the primary event in carbon dioxide fixation, as well as the oxidative fragmentation of the pentose substrate in the photorespiration process. Both reactions occur simultaneously and in competition at the same active site. The polypeptide is Ribulose bisphosphate carboxylase large chain (Villarsia calthifolia (Marsh flower)).